We begin with the raw amino-acid sequence, 1353 residues long: Xanthine dehydrogenase 2 (1353 aa).

The 87-residue stretch at 7-93 (MEAIMYVNGV…GMHVISIEGV (87 aa)) folds into the 2Fe-2S ferredoxin-type domain. [2Fe-2S] cluster contacts are provided by Cys45, Cys50, Cys53, Cys75, Cys115, Cys118, Cys151, and Cys153. The region spanning 249 to 434 (GGNEGITWYR…LSVFLPWTRP (186 aa)) is the FAD-binding PCMH-type domain. Residues 277–284 (LLVGNTEV), Phe357, 367–371 (CIGGN), Asp380, Leu424, and Lys442 contribute to the FAD site. 2 residues coordinate Mo-molybdopterin: Gln788 and Phe819. Substrate contacts are provided by Glu823 and Arg901. Position 933 (Arg933) interacts with Mo-molybdopterin. Positions 935 and 1031 each coordinate substrate. Ala1100 provides a ligand contact to Mo-molybdopterin. Residue Glu1289 is the Proton acceptor of the active site.

Belongs to the xanthine dehydrogenase family. As to quaternary structure, homodimer. It depends on [2Fe-2S] cluster as a cofactor. FAD serves as cofactor. The cofactor is Mo-molybdopterin. As to expression, expressed in roots, leaves, stems, flowers and siliques.

It carries out the reaction xanthine + NAD(+) + H2O = urate + NADH + H(+). It catalyses the reaction hypoxanthine + NAD(+) + H2O = xanthine + NADH + H(+). Key enzyme involved in purine catabolism. Catalyzes the oxidation of hypoxanthine to xanthine and the oxidation of xanthine to urate. Regulates the level of ureides and plays a role during plant growth and development and senescence. This Arabidopsis thaliana (Mouse-ear cress) protein is Xanthine dehydrogenase 2 (XDH2).